Here is an 886-residue protein sequence, read N- to C-terminus: Microsomal triglyceride transfer protein (886 aa).

A signal peptide spans Met1 to Ala24. A Vitellogenin domain is found at Leu28 to Leu662. 2 disulfides stabilise this stretch: Cys174–Cys194 and Cys440–Cys445.

Heterodimer; heterodimerizes with the protein disulfide isomerase. Interacts with apolipoprotein B.

It is found in the endoplasmic reticulum. In terms of biological role, catalyzes the transport of triglyceride, cholesteryl ester, and phospholipid between phospholipid surfaces. Required for the secretion of plasma lipoproteins that contain apolipoprotein B. This Megalobrama amblycephala (Chinese blunt snout bream) protein is Microsomal triglyceride transfer protein.